The chain runs to 33 residues: Cyanophlyctin-beta (33 aa).

A disulfide bridge connects residues C27 and C33.

Expressed by the skin glands.

It localises to the secreted. Its function is as follows. Antimicrobial peptide active against E.coli (MIC=5 uM), K.pneumoniae (MIC=10 uM), B.cereus (MIC=7 uM) and S.aureus (MIC=12 uM). Has very little hemolytic activity. The protein is Cyanophlyctin-beta of Euphlyctis cyanophlyctis (Skittering frog).